Here is a 481-residue protein sequence, read N- to C-terminus: NADH-quinone oxidoreductase subunit N (481 aa).

A run of 14 helical transmembrane segments spans residues 11 to 31 (ALPE…DLWA), 38 to 58 (WTHY…LAVW), 74 to 94 (GMSR…FVYA), 103 to 123 (IFKG…SVMV), 128 to 148 (FLTA…LIAL), 163 to 183 (FVLG…VYGA), 208 to 228 (LGLV…PFHM), 241 to 261 (VTAL…FRIL), 272 to 292 (WSLM…LAAI), 300 to 322 (MLAY…GAVG), 332 to 352 (TYAL…DGDN), 368 to 388 (VWLA…PPLM), 404 to 424 (GYVW…FYYL), and 450 to 470 (SLLS…QTVI).

The protein belongs to the complex I subunit 2 family. NDH-1 is composed of 14 different subunits. Subunits NuoA, H, J, K, L, M, N constitute the membrane sector of the complex.

It is found in the cell inner membrane. It catalyses the reaction a quinone + NADH + 5 H(+)(in) = a quinol + NAD(+) + 4 H(+)(out). Its function is as follows. NDH-1 shuttles electrons from NADH, via FMN and iron-sulfur (Fe-S) centers, to quinones in the respiratory chain. The immediate electron acceptor for the enzyme in this species is believed to be ubiquinone. Couples the redox reaction to proton translocation (for every two electrons transferred, four hydrogen ions are translocated across the cytoplasmic membrane), and thus conserves the redox energy in a proton gradient. The chain is NADH-quinone oxidoreductase subunit N from Neisseria gonorrhoeae (strain ATCC 700825 / FA 1090).